The following is a 352-amino-acid chain: Spermidine/putrescine import ATP-binding protein PotA (352 aa).

The ABC transporter domain maps to 7 to 237 (IELKNVSKKY…PKNKFVANFI (231 aa)). Position 39–46 (39–46 (GPSGCGKT)) interacts with ATP.

Belongs to the ABC transporter superfamily. Spermidine/putrescine importer (TC 3.A.1.11.1) family. In terms of assembly, the complex is composed of two ATP-binding proteins (PotA), two transmembrane proteins (PotB and PotC) and a solute-binding protein (PotD).

The protein localises to the cell membrane. It carries out the reaction ATP + H2O + polyamine-[polyamine-binding protein]Side 1 = ADP + phosphate + polyamineSide 2 + [polyamine-binding protein]Side 1.. In terms of biological role, part of the ABC transporter complex PotABCD involved in spermidine/putrescine import. Responsible for energy coupling to the transport system. This Clostridium acetobutylicum (strain ATCC 824 / DSM 792 / JCM 1419 / IAM 19013 / LMG 5710 / NBRC 13948 / NRRL B-527 / VKM B-1787 / 2291 / W) protein is Spermidine/putrescine import ATP-binding protein PotA.